A 1732-amino-acid chain; its full sequence is Transient receptor potential cation channel subfamily M member 3 (1732 aa).

Residues 1-894 (MPGPWGTVYF…RKIYEFYNAP (894 aa)) are Cytoplasmic-facing. Calmodulin-binding stretches follow at residues 41 to 64 (WTIR…QKSW), 192 to 215 (NFEL…MTTG), 300 to 323 (TGKY…QKIN), 601 to 624 (RKRF…KLLG), and 793 to 816 (RKNS…LEFK). Positions 617–625 (PKALKLLGM) are required for the inhibitory action of G-beta/gamma-subunits of heterotrimeric G-proteins. Residue Ser-796 coordinates 1,2-dioctanoyl-sn-glycero-3-phospho-(1D-myo-inositol-4,5-bisphosphate). A disordered region spans residues 829 to 851 (EIHLQEKEPEEPEKPTKEKDEED). Over residues 831-847 (HLQEKEPEEPEKPTKEK) the composition is skewed to basic and acidic residues. Residues 895–918 (IVKFWFYTLAYIGYLMLFNYIVLV) form a helical membrane-spanning segment. Topologically, residues 919–925 (KMERWPS) are extracellular. Residues 926–948 (TQEWIVISYIFTLGIEKMREILM) form a helical membrane-spanning segment. Over 949-964 (SEPGKLLQKVKVWLQE) the chain is Cytoplasmic. Residues 965–985 (YWNVTDLIAILLFSVGMILRL) form a helical membrane-spanning segment. Residues 986–989 (QDQP) are Extracellular-facing. A helical membrane pass occupies residues 990–1013 (FRSDGRVIYCVNIIYWYIRLLDIF). The Cytoplasmic portion of the chain corresponds to 1014–1028 (GVNKYLGPYVMMIGK). 2 residues coordinate 1,2-dioctanoyl-sn-glycero-3-phospho-(1D-myo-inositol-4,5-bisphosphate): Lys-1017 and Tyr-1018. Residues 1029–1056 (MMIDMMYFVIIMLVVLMSFGVARQAILF) traverse the membrane as a helical segment. Residues 1057–1073 (PNEEPSWKLAKNIFYMP) lie on the Extracellular side of the membrane. Positions 1074-1101 (YWMIYGEVFADQIDPPCGQNETREDGKT) form an intramembrane region, pore-forming. At 1102-1111 (IQLPPCKTGA) the chain is on the extracellular side. The chain crosses the membrane as a helical span at residues 1112–1137 (WIVPAIMACYLLVANILLVNLLIAVF). Over 1138–1732 (NNTFFEVKSI…AFHSFESKHN (595 aa)) the chain is Cytoplasmic. Residues 1610–1732 (EREAELSHPS…AFHSFESKHN (123 aa)) form a disordered region. 2 stretches are compositionally biased toward polar residues: residues 1635–1653 (PISS…NNIT) and 1690–1701 (NTASLRNPFQRS).

The protein belongs to the transient receptor (TC 1.A.4) family. LTrpC subfamily. TRPM3 sub-subfamily. Homotetramer. Interacts with TRPM1; the interaction results in the formation of a heteromultimeric cation channel complex that are functionally different from the homomeric channels.

It is found in the cell membrane. The catalysed reaction is Ca(2+)(in) = Ca(2+)(out). It catalyses the reaction Mn(2+)(in) = Mn(2+)(out). It carries out the reaction Zn(2+)(in) = Zn(2+)(out). The enzyme catalyses Mg(2+)(in) = Mg(2+)(out). The catalysed reaction is Na(+)(in) = Na(+)(out). Its activity is regulated as follows. Activated by the neurosteroid pregnelonone sulfate (PregS). PregS activates the channel by shifting its current-voltage activation curve toward more negative membrane potentials and also potentiates temperature-induced activation. Activated by heat. Intracellular Ca(2+) inhibits TRPM3 probably via interaction with Ca(2+)/calmodulin. Intracellular Mg(2+) inhibits TRPM3 activity. Both intracellular and extracellular protons block TRPM3 through propable binding sites in the pore region. Positively regulated by phosphoinositide phosphoinositol 4,5-biphosphate (PI(4,5)P2). Strongly inhibited by activation of G(i)-coupled receptors via direct binding with G-beta/gamma-subunits of heterotrimeric G-proteins. Insensitive to pregnenolone sulfate (PregS) or heat. With respect to regulation, not inhibited by G-beta/gamma-subunits of heterotrimeric G-proteins. In terms of biological role, constitutively active, non-selective divalent cation-conducting channel that is permeable to Ca(2+), Mn(2+), and Mg(2+), with a high permeability for Ca(2+). However, can be enhanced by increasing temperature and by ligands, including the endogenous neurosteroid pregnenolone sulfate and sphingosine-1 and suppressed by intracellular Mg(2+). Implicated in a variety of cellular processes, including insulin/peptide secretion, vascular constriction and dilation, noxious heat sensing, inflammatory and spontaneous pain sensitivity. In neurons of the dorsal root ganglia, functions as thermosensitive channel for the detection of noxious heat and spontaneous pain. Suggested to function as an ionotropic steroid receptor in beta-cell, indeed pregnenolone sulfate leads to Ca(2+) influx and enhanced insulin secretion. Mediates Zn(2+) uptake into the lumen of pancreatic beta cell secretory granules, thereby regulating insulin secretion. Forms heteromultimeric ion channels with TRPM1 which are permeable for Ca(2+) and Zn(2+) ions. Exists as multiple splice variants which differ significantly in their biophysical properties. Functionally, displays strongly reduced permeability for divalent cations and high selectivity toward monovalent cations. Its function is as follows. No channel activity. This Mus musculus (Mouse) protein is Transient receptor potential cation channel subfamily M member 3.